The sequence spans 411 residues: MSDRDIRCSFCGRTQKEVKKLIAGPGVYICDECVKLAYDIIEEDEEEDVTEEFEDFVLPKPHEIKNFLDQYVIGQERAKKILSVAVYNHYKRIFMKSKITEDVEIQKSNILLIGPTGVGKTLLAETLAKFLKVPFAIADATTLTEAGYVGEDVENILLRLIQNADWDIKRAEKGIVYIDEIDKISRKSENPSITRDVSGEGVQQALLRIVEGTIANVPPQGGRKHPYQEFIQINTKDILFIAGGSFEGIEKIVEKRLDVSSIGFGAQIEPKNRKSLTQILNHIIPEDLIKFGMIPEFVGRFPVVAVLEPLSEEALLKILTEPKNALVKQYKALLSIEGVEIDFTDEALRSIVKEALEKATGARGLRAVMEELMLDLMYELPNLGIKRFTITPELVYNRGKISQELLKKLAG.

Positions 1–49 constitute a ClpX-type ZB domain; that stretch reads MSDRDIRCSFCGRTQKEVKKLIAGPGVYICDECVKLAYDIIEEDEEEDV. 4 residues coordinate Zn(2+): Cys8, Cys11, Cys30, and Cys33. 115–122 is an ATP binding site; sequence PTGVGKTL.

Belongs to the ClpX chaperone family. As to quaternary structure, component of the ClpX-ClpP complex. Forms a hexameric ring that, in the presence of ATP, binds to fourteen ClpP subunits assembled into a disk-like structure with a central cavity, resembling the structure of eukaryotic proteasomes.

In terms of biological role, ATP-dependent specificity component of the Clp protease. It directs the protease to specific substrates. Can perform chaperone functions in the absence of ClpP. The sequence is that of ATP-dependent Clp protease ATP-binding subunit ClpX from Dictyoglomus thermophilum (strain ATCC 35947 / DSM 3960 / H-6-12).